Consider the following 1033-residue polypeptide: Phospholipid-transporting ATPase neo1 (1033 aa).

4 helical membrane-spanning segments follow: residues 133–153 (LKIG…LITL), 274–294 (TLWA…VYTG), 317–337 (INFY…GLTF), and 344–364 (DWYI…PINL). The active-site 4-aspartylphosphate intermediate is the Asp408. Asp408, Lys409, Thr410, Glu491, Phe528, Ser530, Lys533, Lys551, Arg580, Thr581, Thr662, Gly663, Asp664, Arg744, and Lys750 together coordinate ATP. Asp408 is a Mg(2+) binding site. Thr410 provides a ligand contact to Mg(2+). A run of 6 helical transmembrane segments spans residues 768-788 (IGDG…IGIV), 843-863 (VVYS…LLLV), 913-933 (VLIS…LIGF), 939-959 (MLAV…ALQI), 965-985 (TIVM…PFLT), and 992-1012 (FLLG…SLLP). Residue Asp770 participates in Mg(2+) binding. Residues Asn773 and Asp774 each contribute to the ATP site. Mg(2+) is bound at residue Asp774.

This sequence belongs to the cation transport ATPase (P-type) (TC 3.A.3) family. Type IV subfamily. In terms of assembly, functions without a CDC50/LEM3 family accessory subunit. Mg(2+) is required as a cofactor.

The protein localises to the endosome membrane. It localises to the golgi apparatus membrane. It carries out the reaction ATP + H2O + phospholipidSide 1 = ADP + phosphate + phospholipidSide 2.. The enzyme catalyses a 1,2-diacyl-sn-glycero-3-phospho-L-serine(out) + ATP + H2O = a 1,2-diacyl-sn-glycero-3-phospho-L-serine(in) + ADP + phosphate + H(+). It catalyses the reaction a 1,2-diacyl-sn-glycero-3-phosphoethanolamine(out) + ATP + H2O = a 1,2-diacyl-sn-glycero-3-phosphoethanolamine(in) + ADP + phosphate + H(+). Its function is as follows. Flippase that catalyzes the hydrolysis of ATP coupled to the transport of lysophosphatidylserine, phosphatidylethanolamine, and phosphatidylserine from the lumenal to the cytosolic leaflet of the Golgi apparatus membrane and ensures the maintenance of asymmetric distribution of phospholipids. The protein is Phospholipid-transporting ATPase neo1 of Schizosaccharomyces pombe (strain 972 / ATCC 24843) (Fission yeast).